The following is a 386-amino-acid chain: DNase toxin Tse7 (386 aa).

Interacts with Tsi7.

The catalysed reaction is Endonucleolytic cleavage to 5'-phosphodinucleotide and 5'-phosphooligonucleotide end-products.. Its function is as follows. Type VI secretion exported toxin that via to its DNase activity induces growth arrest and ultimately DNA degradation within target cell. The activity is initially neutralized by a cognate immunity protein Tsi7. In Pseudomonas aeruginosa (strain ATCC 15692 / DSM 22644 / CIP 104116 / JCM 14847 / LMG 12228 / 1C / PRS 101 / PAO1), this protein is DNase toxin Tse7.